A 678-amino-acid polypeptide reads, in one-letter code: Probable N-methylproline demethylase (678 aa).

Residues Gly-59, Gln-102, Arg-220, Lys-299, and 321 to 322 (TR) each bind FMN. [4Fe-4S] cluster contacts are provided by Cys-345, Cys-351, and Cys-363. 5 residues coordinate FAD: Ala-396, Glu-415, Gln-423, Arg-433, and Ala-460.

It in the N-terminal section; belongs to the NADH:flavin oxidoreductase/NADH oxidase family. It depends on FMN as a cofactor. The cofactor is FAD. [4Fe-4S] cluster is required as a cofactor.

It catalyses the reaction N-methyl-L-proline + NAD(+) + H2O = L-proline + formaldehyde + NADH + H(+). Its pathway is amine and polyamine degradation; stachydrine degradation. In terms of biological role, possible NADH-dependent oxidase, may function as a demethylase that converts N-methylproline to proline. The protein is Probable N-methylproline demethylase of Rhizobium meliloti (strain 1021) (Ensifer meliloti).